The following is a 506-amino-acid chain: NAD(P)H-quinone oxidoreductase subunit 2 (506 aa).

The next 13 membrane-spanning stretches (helical) occupy residues 14-34 (AIIPEAFILLGIVGTLLVDLA), 42-62 (WAPIICYLSIGSSLFSLALQW), 79-99 (LAIAFRAIIALSTLVSLLISW), 108-128 (PIGEFAAIVLSATLGAMLLCG), 132-152 (LISIFISLETLSVASYLLSGY), 167-187 (LLVGSAAAAVYLYGSSFLYGL), 206-226 (FITSLALVFVLSTVAFKIAAV), 240-260 (PTPVVAFLSVGSKTAGFAFAI), 276-296 (LLFTILAILSMALGNVVALAQ), 302-322 (MLAYSSIGQAGFVMIGIVSGT), 330-350 (VLYLAAYLFMNLGAFSCVILF), 374-394 (LGLSLCLLSLGGLPPMLGFFG), and 409-429 (LLVIIGLVTSVISIYYYISVI).

This sequence belongs to the complex I subunit 2 family. In terms of assembly, NDH-1 can be composed of about 15 different subunits; different subcomplexes with different compositions have been identified which probably have different functions.

It is found in the cellular thylakoid membrane. It carries out the reaction a plastoquinone + NADH + (n+1) H(+)(in) = a plastoquinol + NAD(+) + n H(+)(out). It catalyses the reaction a plastoquinone + NADPH + (n+1) H(+)(in) = a plastoquinol + NADP(+) + n H(+)(out). NDH-1 shuttles electrons from an unknown electron donor, via FMN and iron-sulfur (Fe-S) centers, to quinones in the respiratory and/or the photosynthetic chain. The immediate electron acceptor for the enzyme in this species is believed to be plastoquinone. Couples the redox reaction to proton translocation, and thus conserves the redox energy in a proton gradient. Cyanobacterial NDH-1 also plays a role in inorganic carbon-concentration. The protein is NAD(P)H-quinone oxidoreductase subunit 2 of Prochlorococcus marinus (strain MIT 9312).